Consider the following 474-residue polypeptide: Glycogen synthase (474 aa).

Residue Lys-15 coordinates ADP-alpha-D-glucose.

This sequence belongs to the glycosyltransferase 1 family. Bacterial/plant glycogen synthase subfamily.

It catalyses the reaction [(1-&gt;4)-alpha-D-glucosyl](n) + ADP-alpha-D-glucose = [(1-&gt;4)-alpha-D-glucosyl](n+1) + ADP + H(+). The protein operates within glycan biosynthesis; glycogen biosynthesis. Synthesizes alpha-1,4-glucan chains using ADP-glucose. The sequence is that of Glycogen synthase from Finegoldia magna (strain ATCC 29328 / DSM 20472 / WAL 2508) (Peptostreptococcus magnus).